We begin with the raw amino-acid sequence, 822 residues long: Tubulin polyglutamylase TTLL6 (822 aa).

The tract at residues 1–24 (MLQCLTSESEEGAEEREESSTEDL) is disordered. Over residues 8–24 (ESEEGAEEREESSTEDL) the composition is skewed to acidic residues. The region spanning 57–400 (KKRLVINLSN…GNCDKKKVLE (344 aa)) is the TTL domain. ATP contacts are provided by residues Lys174, 180–181 (QG), 202–205 (QLYI), and 215–217 (KFD). Gln180 contacts a protein. Arg241 provides a ligand contact to L-glutamate. 263-264 (TN) serves as a coordination point for ATP. Positions 265, 266, and 283 each coordinate L-glutamate. Residues Asp346, Glu359, and Asn361 each coordinate Mg(2+). His362 serves as a coordination point for a protein. The c-MTBD region stretch occupies residues 371 to 450 (KLDKEVKDSL…CGGFRLIYPG (80 aa)). Lys377 provides a ligand contact to L-glutamate. Disordered regions lie at residues 736-772 (PLFP…SVFV) and 791-822 (TQAR…TATA). The segment covering 802–814 (SHSGTTTRDSSTQ) has biased composition (polar residues).

It belongs to the tubulin--tyrosine ligase family. In terms of assembly, found in a complex with CEP41. Mg(2+) serves as cofactor. In terms of tissue distribution, highly expressed in testis. Expressed in brain, heart, kidney, liver, lung, muscle and trachea. In the brain, specifically expressed in ependymal cilia.

The protein localises to the cytoplasm. It localises to the cytoskeleton. Its subcellular location is the cilium axoneme. The protein resides in the cilium basal body. It carries out the reaction L-glutamyl-[protein] + L-glutamate + ATP = gamma-L-glutamyl-L-glutamyl-[protein] + ADP + phosphate + H(+). The enzyme catalyses (L-glutamyl)(n)-gamma-L-glutamyl-L-glutamyl-[protein] + L-glutamate + ATP = (L-glutamyl)(n+1)-gamma-L-glutamyl-L-glutamyl-[protein] + ADP + phosphate + H(+). Functionally, polyglutamylase which modifies both tubulin and non-tubulin proteins, generating alpha-linked polyglutamate side chains on the gamma-carboxyl group of specific glutamate residues of target proteins. Preferentially mediates ATP-dependent long polyglutamate chain elongation over the initiation step of the polyglutamylation reaction. Preferentially modifies the alpha-tubulin tail over a beta-tail. Promotes tubulin polyglutamylation which stimulates spastin/SPAST-mediated microtubule severing, thereby regulating microtubule functions. Mediates microtubule polyglutamylation in primary cilia axoneme which is important for ciliary structural formation and motility. Mediates microtubule polyglutamylation in motile cilia, necessary for the regulation of ciliary coordinated beating. Polyglutamylates non-tubulin protein nucleotidyltransferase CGAS, leading to CGAS DNA-binding inhibition, thereby preventing antiviral defense response. This chain is Tubulin polyglutamylase TTLL6, found in Mus musculus (Mouse).